The following is a 185-amino-acid chain: Protein TIFY 5 (185 aa).

The Tify domain maps to alanine 38–glutamine 72. The disordered stretch occupies residues lysine 77–arginine 185. Residues proline 137–alanine 157 are compositionally biased toward low complexity. Residues proline 155 to tyrosine 182 carry the Jas motif. The Nuclear localization signal signature appears at methionine 162–phenylalanine 169.

It belongs to the TIFY/JAZ family. Ubiquitinated. Targeted for degradation by the SCF(COI1) E3 ubiquitin ligase-proteasome pathway during jasmonate signaling.

The protein localises to the nucleus. Functionally, repressor of jasmonate responses. This chain is Protein TIFY 5, found in Oryza sativa subsp. indica (Rice).